Reading from the N-terminus, the 501-residue chain is DELTA-alicitoxin-Pse2a (501 aa).

The N-terminal stretch at 1–22 (MSPYFKLSSALIFLAITMEALC) is a signal peptide. A propeptide spanning residues 23–35 (SPIENTSTSNKDN) is cleaved from the precursor. The MACPF domain occupies 23 to 359 (SPIENTSTSN…GFLHFGCSYL (337 aa)). Residues 135–159 (AAVTNNIASSEEEVQGLSLNLKAYS) adopt a coiled-coil conformation. In terms of domain architecture, EGF-like spans 388–422 (VCKVGPEGCQHHEDCHYRAAFWCECGGPYDLARTC). Disulfide bonds link cysteine 389-cysteine 402, cysteine 396-cysteine 410, and cysteine 412-cysteine 422.

The protein localises to the secreted. Its subcellular location is the nematocyst. Functionally, causes lethal toxicity to the shrimp Palaemon paucidence, and hemolytic activity toward sheep red blood cells. The chain is DELTA-alicitoxin-Pse2a from Phyllodiscus semoni (Night anemone).